A 428-amino-acid chain; its full sequence is Gamma-glutamyl phosphate reductase (428 aa).

It belongs to the gamma-glutamyl phosphate reductase family.

Its subcellular location is the cytoplasm. The catalysed reaction is L-glutamate 5-semialdehyde + phosphate + NADP(+) = L-glutamyl 5-phosphate + NADPH + H(+). The protein operates within amino-acid biosynthesis; L-proline biosynthesis; L-glutamate 5-semialdehyde from L-glutamate: step 2/2. Its function is as follows. Catalyzes the NADPH-dependent reduction of L-glutamate 5-phosphate into L-glutamate 5-semialdehyde and phosphate. The product spontaneously undergoes cyclization to form 1-pyrroline-5-carboxylate. The protein is Gamma-glutamyl phosphate reductase of Streptomyces coelicolor (strain ATCC BAA-471 / A3(2) / M145).